The following is a 121-amino-acid chain: uncharacterized protein (121 aa).

Disordered regions lie at residues 24 to 43 (SGRT…GRGG) and 100 to 121 (DHEN…TDQR).

This is an uncharacterized protein from Homo sapiens (Human).